We begin with the raw amino-acid sequence, 548 residues long: Chaperonin GroEL (548 aa).

ATP-binding positions include 30 to 33, K51, 87 to 91, G415, and D494; these read TLGP and DGTTT.

The protein belongs to the chaperonin (HSP60) family. As to quaternary structure, forms a cylinder of 14 subunits composed of two heptameric rings stacked back-to-back. Interacts with the co-chaperonin GroES.

It localises to the cytoplasm. It carries out the reaction ATP + H2O + a folded polypeptide = ADP + phosphate + an unfolded polypeptide.. Its function is as follows. Together with its co-chaperonin GroES, plays an essential role in assisting protein folding. The GroEL-GroES system forms a nano-cage that allows encapsulation of the non-native substrate proteins and provides a physical environment optimized to promote and accelerate protein folding. This chain is Chaperonin GroEL, found in Oleispira antarctica.